Consider the following 891-residue polypeptide: uncharacterized protein (891 aa).

The signal sequence occupies residues M1–A20. A run of 6 helical transmembrane segments spans residues V525–I545, T568–A588, L614–I634, V652–M672, I685–I705, and F776–L796.

This sequence belongs to the TrbL/VirB6 family.

It localises to the cell membrane. This is an uncharacterized protein from Rickettsia conorii (strain ATCC VR-613 / Malish 7).